The sequence spans 51 residues: Ribosome biogenesis protein Nop10 (51 aa).

Belongs to the NOP10 family.

Functionally, involved in ribosome biogenesis; more specifically in 18S rRNA pseudouridylation and in cleavage of pre-rRNA. The polypeptide is Ribosome biogenesis protein Nop10 (Methanococcus aeolicus (strain ATCC BAA-1280 / DSM 17508 / OCM 812 / Nankai-3)).